We begin with the raw amino-acid sequence, 418 residues long: UPF0754 membrane protein alr5253 (418 aa).

The next 2 helical transmembrane spans lie at 10 to 30 and 394 to 414; these read WSHL…GYFT and IVSL…AFFI.

The protein belongs to the UPF0754 family.

It is found in the cell inner membrane. The polypeptide is UPF0754 membrane protein alr5253 (Nostoc sp. (strain PCC 7120 / SAG 25.82 / UTEX 2576)).